We begin with the raw amino-acid sequence, 87 residues long: Protein Isd11 (87 aa).

It belongs to the complex I LYR family. As to quaternary structure, interacts with IscS; the interaction enhances cysteine desulfurase activity of IscS. Component of a complex, at least composed of IscS, Isd11 and IscU.

It is found in the mitochondrion. Its pathway is cofactor biosynthesis; iron-sulfur cluster biosynthesis. Its function is as follows. Participates in iron-sulfur cluster formation (ISC) pathway for iron-sulfur (Fe-S) cluster biogenesis. Enhances cysteine desulfurase activity of IscS. The sequence is that of Protein Isd11 from Plasmodium falciparum (isolate 3D7).